An 87-amino-acid chain; its full sequence is DNA-directed RNA polymerase subunit omega (87 aa).

This sequence belongs to the RNA polymerase subunit omega family. In terms of assembly, the RNAP catalytic core consists of 2 alpha, 1 beta, 1 beta' and 1 omega subunit. When a sigma factor is associated with the core the holoenzyme is formed, which can initiate transcription.

It catalyses the reaction RNA(n) + a ribonucleoside 5'-triphosphate = RNA(n+1) + diphosphate. In terms of biological role, promotes RNA polymerase assembly. Latches the N- and C-terminal regions of the beta' subunit thereby facilitating its interaction with the beta and alpha subunits. The protein is DNA-directed RNA polymerase subunit omega of Acidothermus cellulolyticus (strain ATCC 43068 / DSM 8971 / 11B).